Reading from the N-terminus, the 278-residue chain is BPI fold-containing family A member 1 (278 aa).

The N-terminal stretch at 1–19 (MFLVGSLVVLCGLLAHSTA) is a signal peptide. Repeat repeat units lie at residues 23-28 (GLPLPL), 30-36 (QGPPLPL), 39-44 (GPPLPL), and 47-52 (GQLLPL). The tract at residues 23–52 (GLPLPLGQGPPLPLNQGPPLPLNQGQLLPL) is 4 X 6 AA repeats of G-[LPQ]-[PL]-L-P-L. The tract at residues 112 to 117 (LVGGLL) is important for surfactant activity and antibacterial properties. N-linked (GlcNAc...) asparagine glycosylation is found at Asn-182 and Asn-228. A disulfide bond links Cys-204 and Cys-246.

It belongs to the BPI/LBP/Plunc superfamily. Plunc family. As to quaternary structure, monomer. Interacts (via N-terminus) with SCNN1B, a subunit of the heterotrimeric epithelial sodium channel (ENaC); this inhibits proteolytic activation of ENaC. Detected in airway epithelia (trachea and lung) and in bronchoalveolar fluid (at protein level). Upper airways, nasopharyngeal epithelium and thymus. Highest expression in the trachea and progressive decrease from proximal (bronchial) to distal (bronchiolar) airways. No expression is detected in the terminal bronchioles, respiratory bronchioles or lung alveoli.

Its subcellular location is the secreted. Functionally, lipid-binding protein which shows high specificity for the surfactant phospholipid dipalmitoylphosphatidylcholine (DPPC). Plays a role in the innate immune responses of the upper airways. Reduces the surface tension in secretions from airway epithelia and inhibits the formation of biofilm by pathogenic Gram-negative bacteria, such as P.aeruginosa and K.pneumoniae. Negatively regulates proteolytic cleavage of SCNN1G, an event that is required for activation of the epithelial sodium channel (ENaC), and thereby contributes to airway surface liquid homeostasis and proper clearance of mucus. Plays a role in the airway inflammatory response after exposure to irritants. May attract macrophages and neutrophils. The polypeptide is BPI fold-containing family A member 1 (Bpifa1) (Mus musculus (Mouse)).